Consider the following 1104-residue polypeptide: Lon protease homolog, mitochondrial (1104 aa).

The N-terminal 58 residues, 1 to 58 (MLPLRAFARLAQRPRLSRPTQLARSSLPRPSPSRPAAHYLALAPAPSTRFLHSSPPVL), are a transit peptide targeting the mitochondrion. 2 disordered regions span residues 8 to 144 (ARLA…KEVA) and 275 to 295 (EGSQ…SEVP). The segment covering 22–46 (LARSSLPRPSPSRPAAHYLALAPAP) has biased composition (low complexity). Residues 80–103 (KQDDQVEKPLPDAESSKSAEERAK) are compositionally biased toward basic and acidic residues. Low complexity predominate over residues 104-128 (SQSSKPDIKASSSDSVSSSAPAPGS). The span at 129–139 (ADGGSPPGAGG) shows a compositional bias: gly residues. The 290-residue stretch at 155–444 (VLAIPITHRP…RALVLLKKEL (290 aa)) folds into the Lon N-terminal domain. Positions 281-291 (AKGEGEVKSFE) are enriched in basic and acidic residues. An ATP-binding site is contributed by 597 to 604 (GPPGVGKT). The region spanning 895–1082 (SPPAGVSTGL…RQVLHEAFRG (188 aa)) is the Lon proteolytic domain. Residues serine 987 and lysine 1030 contribute to the active site.

It belongs to the peptidase S16 family. As to quaternary structure, homohexamer or homoheptamer. Organized in a ring with a central cavity.

It localises to the mitochondrion matrix. It catalyses the reaction Hydrolysis of proteins in presence of ATP.. In terms of biological role, ATP-dependent serine protease that mediates the selective degradation of misfolded, unassembled or oxidatively damaged polypeptides as well as certain short-lived regulatory proteins in the mitochondrial matrix. May also have a chaperone function in the assembly of inner membrane protein complexes. Participates in the regulation of mitochondrial gene expression and in the maintenance of the integrity of the mitochondrial genome. Binds to mitochondrial DNA in a site-specific manner. The protein is Lon protease homolog, mitochondrial of Cryptococcus neoformans var. neoformans serotype D (strain JEC21 / ATCC MYA-565) (Filobasidiella neoformans).